A 202-amino-acid polypeptide reads, in one-letter code: Tetratricopeptide repeat protein 36 (202 aa).

TPR repeat units follow at residues 49–82 (AQDL…LPER), 83–116 (ASAY…SGIA), and 121–154 (RQAL…GSDF).

This sequence belongs to the TTC36 family.

This chain is Tetratricopeptide repeat protein 36 (ttc36), found in Xenopus tropicalis (Western clawed frog).